We begin with the raw amino-acid sequence, 85 residues long: Large ribosomal subunit protein bL27 (85 aa).

The disordered stretch occupies residues 1–21 (MAHKKGVGSSRNGRDSDGQRL).

This sequence belongs to the bacterial ribosomal protein bL27 family.

The chain is Large ribosomal subunit protein bL27 from Citrifermentans bemidjiense (strain ATCC BAA-1014 / DSM 16622 / JCM 12645 / Bem) (Geobacter bemidjiensis).